We begin with the raw amino-acid sequence, 117 residues long: Huntingtin-interacting protein M (117 aa).

Disordered stretches follow at residues 1–30 and 71–117; these read MSEK…VPRS and EASN…RKND. A compositionally biased stretch (polar residues) spans 72-81; that stretch reads ASNNGSMRNT. Positions 82–117 are enriched in basic and acidic residues; the sequence is SQDREREVDNNREPHSAESDVTRFLFDEMPKSRKND.

May interact with the N-terminus of HD.

This Homo sapiens (Human) protein is Huntingtin-interacting protein M.